A 92-amino-acid polypeptide reads, in one-letter code: Small ribosomal subunit protein uS19c (92 aa).

It belongs to the universal ribosomal protein uS19 family.

It localises to the plastid. The protein resides in the chloroplast. Its function is as follows. Protein S19 forms a complex with S13 that binds strongly to the 16S ribosomal RNA. The chain is Small ribosomal subunit protein uS19c (rps19) from Picea abies (Norway spruce).